Reading from the N-terminus, the 570-residue chain is Polypeptide N-acetylgalactosaminyltransferase 2 (570 aa).

Over 1-6 (MRRRSR) the chain is Cytoplasmic. The chain crosses the membrane as a helical; Signal-anchor for type II membrane protein span at residues 7-24 (MLLCFALLWVLGIAYYMY). Over 25–570 (SGGGSALAAG…QWKFSLNLQQ (546 aa)) the chain is Lumenal. Serine 29 is a glycosylation site (O-linked (Xyl...) (chondroitin sulfate) serine). 4 cysteine pairs are disulfide-bonded: cysteine 125-cysteine 353, cysteine 344-cysteine 422, cysteine 455-cysteine 472, and cysteine 495-cysteine 512. A catalytic subdomain A region spans residues 134–239 (LPATSVVITF…ERWLEPLLER (106 aa)). Residues threonine 142, aspartate 175, and arginine 200 each contribute to the substrate site. Aspartate 223 provides a ligand contact to Mn(2+). A substrate-binding site is contributed by serine 224. A Mn(2+)-binding site is contributed by histidine 225. Residues 299–361 (PIKTPMIAGG…PCSRVGHVFR (63 aa)) form a catalytic subdomain B region. Tryptophan 330 is a binding site for substrate. Position 358 (histidine 358) interacts with Mn(2+). Substrate contacts are provided by arginine 361, histidine 364, and tyrosine 366. In terms of domain architecture, Ricin B-type lectin spans 442 to 565 (QDIAFGALQQ…PALSQQWKFS (124 aa)). An N-linked (GlcNAc...) asparagine glycan is attached at asparagine 515. Serine 535 carries the post-translational modification Phosphoserine. A disulfide bond links cysteine 538 and cysteine 554.

It belongs to the glycosyltransferase 2 family. GalNAc-T subfamily. Requires Mn(2+) as cofactor. As to expression, widely expressed at high level.

The protein resides in the golgi apparatus. Its subcellular location is the golgi stack membrane. The protein localises to the secreted. The catalysed reaction is L-seryl-[protein] + UDP-N-acetyl-alpha-D-galactosamine = a 3-O-[N-acetyl-alpha-D-galactosaminyl]-L-seryl-[protein] + UDP + H(+). It catalyses the reaction L-threonyl-[protein] + UDP-N-acetyl-alpha-D-galactosamine = a 3-O-[N-acetyl-alpha-D-galactosaminyl]-L-threonyl-[protein] + UDP + H(+). It participates in protein modification; protein glycosylation. Its function is as follows. Catalyzes the initial reaction in O-linked oligosaccharide biosynthesis, the transfer of an N-acetyl-D-galactosamine residue to a serine or threonine residue on the protein receptor. Has a broad spectrum of substrates for peptides such as EA2, Muc5AC, Muc1a, Muc1b. Probably involved in O-linked glycosylation of the immunoglobulin A1 (IgA1) hinge region. Involved in O-linked glycosylation of APOC-III, ANGPTL3 and PLTP. It participates in the regulation of HDL-C metabolism. This Mus musculus (Mouse) protein is Polypeptide N-acetylgalactosaminyltransferase 2 (Galnt2).